Reading from the N-terminus, the 161-residue chain is Probable chemoreceptor glutamine deamidase CheD (161 aa).

The protein belongs to the CheD family.

The catalysed reaction is L-glutaminyl-[protein] + H2O = L-glutamyl-[protein] + NH4(+). In terms of biological role, probably deamidates glutamine residues to glutamate on methyl-accepting chemotaxis receptors (MCPs), playing an important role in chemotaxis. The sequence is that of Probable chemoreceptor glutamine deamidase CheD from Trichlorobacter lovleyi (strain ATCC BAA-1151 / DSM 17278 / SZ) (Geobacter lovleyi).